Here is a 487-residue protein sequence, read N- to C-terminus: MNAMNDKWYSGMARTEDWWAVWLGLIMFMASVSSLWGWELTGWMAKPDTWVWEKFSIEGVLKSSGKPEWHPALSLLVTYLVFTALTCLAAWSMKFDLKQFFIGWTILFIMTWVIWIIGNEAHFKASVYEMDKYGLSWGLSLGSGFSYLLALLVGLVIGNFFKNTARFLNEAAKPEWFIKTAIVFLGIKIGVMSIEAAGFITELVMTGVAATFVAYMLFWPIVYALGRRVFHLSRDAAAVLSSGISICGISAAIATAGAIRARPALPAFVSILVVIFAMFELIILPGFYTAIAPEQPIVNGSALGLTVKTDGADAAAGAMLDELMRANAEANLGIVWKEGWILMASLTTKIWIDMFIGVWAFVLALVWVYKVERKPGQSKIGLMEIWHRFPKFVLGYLLVWFSYIMLASSGSEAAETLHKAAAAVEGPMRNMMFMLTFISIGIITDFSKLKGMGKLALLYAIALFGIIAPIAYGVAWIFHRGMMPPVL.

The next 11 membrane-spanning stretches (helical) occupy residues 19 to 38, 71 to 93, 100 to 119, 139 to 161, 181 to 200, 204 to 226, 269 to 291, 350 to 369, 389 to 411, 426 to 443, and 456 to 478; these read WAVW…LWGW, PALS…AWSM, FFIG…IIGN, LSLG…GNFF, AIVF…AGFI, VMTG…YALG, VSIL…YTAI, IWID…VWVY, FPKF…SSGS, GPMR…IGII, and ALLY…AWIF.

The protein belongs to the UPF0324 family.

Its subcellular location is the cell membrane. This is UPF0324 membrane protein NE0724 from Nitrosomonas europaea (strain ATCC 19718 / CIP 103999 / KCTC 2705 / NBRC 14298).